A 74-amino-acid chain; its full sequence is UPF0346 protein PEPE_1063 (74 aa).

This sequence belongs to the UPF0346 family.

This Pediococcus pentosaceus (strain ATCC 25745 / CCUG 21536 / LMG 10740 / 183-1w) protein is UPF0346 protein PEPE_1063.